We begin with the raw amino-acid sequence, 419 residues long: Light-dependent chlorophyll f synthase (419 aa).

A run of 5 helical transmembrane segments spans residues 73-90, 162-177, 186-200, 241-262, and 323-337; these read YIGWFGMLAIPTLATAAI, HFIIGIISYQDREWEL, WISLAFTAPVAASVS, LHQMGVIGVLGGALLCAVHGSL, and CLAALPVAGIWSAAI. Histidine 162 is an a chlorophyll binding site. Histidine 242 is a binding site for a chlorophyll.

The protein belongs to the reaction center PufL/M/PsbA/D family. As to quaternary structure, homodimer.

It localises to the cellular thylakoid membrane. Synthesizes chlorophyll f or chlorophyllide f (Chl f, 2-formyl chlorophyll a), probably by oxidation of chlorophyll a or chlorophyllide a and reduction of plastoquinone. The reaction is probably light-dependent. Chl f absorbs far red light (FRL, 707 nm in 100% methanol), and is synthesized when cells are grown in FRL, where it provides the advantage of extending the spectral range of harvested light in terrestrial cyanobacteria. Chl f synthesis is probably light-dependent. The protein is Light-dependent chlorophyll f synthase of Synechococcus sp. (strain ATCC 29403 / PCC 7335).